Here is a 422-residue protein sequence, read N- to C-terminus: Proton-gated ion channel subunit pbo-6 (422 aa).

An N-terminal signal peptide occupies residues 1–20 (MQCSFLTIFIFITTVTVGVA). Residues 21-233 (EFSEQYQGSS…IKVARKPFYY (213 aa)) are Extracellular-facing. Cysteines 151 and 165 form a disulfide. Transmembrane regions (helical) follow at residues 234–254 (LISL…GLFA), 268–288 (LGVT…EKVP), and 294–314 (VPLL…ATIL). The Cytoplasmic portion of the chain corresponds to 315–378 (TSTVMRVHAK…GEVSRRMDYL (64 aa)). The helical transmembrane segment at 379–399 (LASVFIIIISTPTLYLFYMCF) threads the bilayer.

It belongs to the ligand-gated ion channel (TC 1.A.9) family. Acetylcholine receptor (TC 1.A.9.1) subfamily. As to quaternary structure, the functional channel is a hetero-oligomer of pbo-5 and pbo-6. Expressed in the posterior body muscles.

It localises to the membrane. Functionally, forms a proton-gated ion channel with pbo-5 that is activated by acidification of the posterior coelomic space, leading to posterior body wall muscle contraction (pBoc) during the defecation cycle. Not necessary for stimulation of posterior body contraction (pBoc). Does not bind neurotransmitters such as acetylcholine, gamma-aminobutyric acid, glycine, serotonin, glutamate or choline. The sequence is that of Proton-gated ion channel subunit pbo-6 from Caenorhabditis elegans.